The following is a 99-amino-acid chain: CLAVATA3/ESR (CLE)-related protein 17 (99 aa).

An N-terminal signal peptide occupies residues 1–21 (MTHVLVRRQGQGKKRRWDVNM). Basic and acidic residues predominate over residues 77–89 (LSRDDIYGDDKRV). The disordered stretch occupies residues 77–99 (LSRDDIYGDDKRVVHTGPNPLHN). At P94 the chain carries Hydroxyproline. P94 carries O-linked (Ara...) hydroxyproline glycosylation.

This sequence belongs to the CLV3/ESR signal peptide family. Post-translationally, the O-glycosylation (arabinosylation) of the hydroxyproline Pro-94 enhances binding affinity of the CLE17p peptide for its receptor. As to expression, mostly expressed in seedlings, roots, flowers, stems and apex, and, to a lower extent, in leaves and siliques.

Its subcellular location is the secreted. It localises to the extracellular space. Its function is as follows. Extracellular signal peptide that regulates cell fate. Represses root apical meristem maintenance. Regulates the transition of protophloem cells from proliferation to differentiation, thus impinging on postembryonic growth capacity of the root meristem; this signaling pathway requires CRN and CLV2. This Arabidopsis thaliana (Mouse-ear cress) protein is CLAVATA3/ESR (CLE)-related protein 17.